The sequence spans 334 residues: N-acetyl-gamma-glutamyl-phosphate reductase (334 aa).

Cys-154 is a catalytic residue.

This sequence belongs to the NAGSA dehydrogenase family. Type 1 subfamily.

The protein resides in the cytoplasm. It carries out the reaction N-acetyl-L-glutamate 5-semialdehyde + phosphate + NADP(+) = N-acetyl-L-glutamyl 5-phosphate + NADPH + H(+). It functions in the pathway amino-acid biosynthesis; L-arginine biosynthesis; N(2)-acetyl-L-ornithine from L-glutamate: step 3/4. In terms of biological role, catalyzes the NADPH-dependent reduction of N-acetyl-5-glutamyl phosphate to yield N-acetyl-L-glutamate 5-semialdehyde. The chain is N-acetyl-gamma-glutamyl-phosphate reductase from Escherichia coli O6:H1 (strain CFT073 / ATCC 700928 / UPEC).